Here is a 257-residue protein sequence, read N- to C-terminus: Imidazole glycerol phosphate synthase subunit HisF (257 aa).

Residues Asp-12 and Asp-131 contribute to the active site.

It belongs to the HisA/HisF family. In terms of assembly, heterodimer of HisH and HisF.

It is found in the cytoplasm. It catalyses the reaction 5-[(5-phospho-1-deoxy-D-ribulos-1-ylimino)methylamino]-1-(5-phospho-beta-D-ribosyl)imidazole-4-carboxamide + L-glutamine = D-erythro-1-(imidazol-4-yl)glycerol 3-phosphate + 5-amino-1-(5-phospho-beta-D-ribosyl)imidazole-4-carboxamide + L-glutamate + H(+). It functions in the pathway amino-acid biosynthesis; L-histidine biosynthesis; L-histidine from 5-phospho-alpha-D-ribose 1-diphosphate: step 5/9. IGPS catalyzes the conversion of PRFAR and glutamine to IGP, AICAR and glutamate. The HisF subunit catalyzes the cyclization activity that produces IGP and AICAR from PRFAR using the ammonia provided by the HisH subunit. The polypeptide is Imidazole glycerol phosphate synthase subunit HisF (Saccharophagus degradans (strain 2-40 / ATCC 43961 / DSM 17024)).